The chain runs to 324 residues: Protein ChrB (324 aa).

Together with ChrA1, this protein reduces chromate accumulation and is essential for chromate resistance, possibly as a regulatory protein. The polypeptide is Protein ChrB (Cupriavidus metallidurans (strain ATCC 43123 / DSM 2839 / NBRC 102507 / CH34) (Ralstonia metallidurans)).